Here is a 498-residue protein sequence, read N- to C-terminus: Probable malate:quinone oxidoreductase 2 (498 aa).

It belongs to the MQO family. Requires FAD as cofactor.

It carries out the reaction (S)-malate + a quinone = a quinol + oxaloacetate. It functions in the pathway carbohydrate metabolism; tricarboxylic acid cycle; oxaloacetate from (S)-malate (quinone route): step 1/1. This chain is Probable malate:quinone oxidoreductase 2, found in Staphylococcus aureus (strain MW2).